Reading from the N-terminus, the 201-residue chain is GTP-binding protein ryh1 (201 aa).

Residue 18–25 (GEQSVGKT) coordinates GTP. Positions 40 to 48 (YQATIGIDF) match the Effector region motif. Residues 66 to 70 (DTAGQ) and 124 to 127 (NKTD) each bind GTP. S-geranylgeranyl cysteine attachment occurs at residues C199 and C201. Residue C201 is modified to Cysteine methyl ester.

Belongs to the small GTPase superfamily. Rab family.

Its subcellular location is the endosome membrane. It is found in the golgi apparatus membrane. The protein localises to the nucleus. The protein resides in the cytoplasm. It localises to the cytosol. In terms of biological role, has a role in retrograde traffricking of proteins from the endosome to the Golgi. Involved in protein transport to the plasma membrane. Involved in the secretory pathway where it has a role in acid phosphatase secretion. Required also in normal glycosylation trafficking pathways. The chain is GTP-binding protein ryh1 (ryh1) from Schizosaccharomyces pombe (strain 972 / ATCC 24843) (Fission yeast).